Consider the following 80-residue polypeptide: Exodeoxyribonuclease 7 small subunit (80 aa).

This sequence belongs to the XseB family. In terms of assembly, heterooligomer composed of large and small subunits.

Its subcellular location is the cytoplasm. It carries out the reaction Exonucleolytic cleavage in either 5'- to 3'- or 3'- to 5'-direction to yield nucleoside 5'-phosphates.. In terms of biological role, bidirectionally degrades single-stranded DNA into large acid-insoluble oligonucleotides, which are then degraded further into small acid-soluble oligonucleotides. The protein is Exodeoxyribonuclease 7 small subunit of Pseudomonas fluorescens (strain SBW25).